A 236-amino-acid polypeptide reads, in one-letter code: N-acetyl-alpha-D-glucosaminyl L-malate deacetylase 1 (236 aa).

Zn(2+) contacts are provided by His12, Asp15, and His113.

The protein belongs to the PIGL family. It depends on Zn(2+) as a cofactor.

The enzyme catalyses (S)-malyl N-acetyl-alpha-D-glucosaminide + H2O = (S)-malyl alpha-D-glucosaminide + acetate. Involved in bacillithiol (BSH) biosynthesis. Catalyzes the second step of the pathway, the deacetylation of N-acetylglucosaminylmalate (GlcNAc-Mal) to glucosamine malate (GlcN-Mal). The polypeptide is N-acetyl-alpha-D-glucosaminyl L-malate deacetylase 1 (Bacillus subtilis (strain 168)).